We begin with the raw amino-acid sequence, 237 residues long: Zinc finger protein 22 (237 aa).

Residues 1–33 are disordered; that stretch reads MRLGKPKGGISRSASQGKTYESKRKTARQRQKW. N6-acetyllysine occurs at positions 18 and 23. C2H2-type zinc fingers lie at residues 55–82, 83–110, 111–138, 139–166, and 167–194; these read YKCTKCSKSFSQSSTLFQHKKIHTGKKS, HKCADCGKSFFQSSNLIQHRRIHTGEKP, YKCDECGERFKQSSNLIQHQRIHTGEKP, YCCDECGRCFSQSSHLIQHQRTHTGEKP, and YQCEECDKCFSQSSHLRQHMKVHKEKKS. Residues 188 to 217 are compositionally biased toward basic residues; it reads VHKEKKSHKRGKNARAKTHPVSWKRGKGRK. The disordered stretch occupies residues 188–218; sequence VHKEKKSHKRGKNARAKTHPVSWKRGKGRKA.

The protein belongs to the krueppel C2H2-type zinc-finger protein family. As to expression, highly expressed in the ameloblast layer of mandibular incisors, moderately expressed in submandibular gland, calvaria, kidney and lung, and expressed at low levels in brain and thymus.

It is found in the nucleus. Functionally, binds DNA through the consensus sequence 5'-CAATG-3'. May be involved in transcriptional regulation and may play a role in tooth formation. This is Zinc finger protein 22 (Znf22) from Rattus norvegicus (Rat).